We begin with the raw amino-acid sequence, 59 residues long: Large ribosomal subunit protein bL32 (59 aa).

The interval 1-59 (MAVQQNKKSPSKRGMHRSHDALTAPALFVDSTTGEVHRPHHISPNGMYRGRKVVKAKGE) is disordered. Basic residues predominate over residues 49–59 (RGRKVVKAKGE).

This sequence belongs to the bacterial ribosomal protein bL32 family.

This is Large ribosomal subunit protein bL32 from Neisseria gonorrhoeae (strain ATCC 700825 / FA 1090).